We begin with the raw amino-acid sequence, 187 residues long: Large ribosomal subunit protein uL22A (187 aa).

The protein belongs to the universal ribosomal protein uL22 family. As to quaternary structure, component of the large ribosomal subunit (LSU). Mature yeast ribosomes consist of a small (40S) and a large (60S) subunit. The 40S small subunit contains 1 molecule of ribosomal RNA (18S rRNA) and at least 33 different proteins. The large 60S subunit contains 3 rRNA molecules (25S, 5.8S and 5S rRNA) and at least 46 different proteins. uL22 is associated with the polypeptide exit tunnel.

Its subcellular location is the cytoplasm. Functionally, component of the ribosome, a large ribonucleoprotein complex responsible for the synthesis of proteins in the cell. The small ribosomal subunit (SSU) binds messenger RNAs (mRNAs) and translates the encoded message by selecting cognate aminoacyl-transfer RNA (tRNA) molecules. The large subunit (LSU) contains the ribosomal catalytic site termed the peptidyl transferase center (PTC), which catalyzes the formation of peptide bonds, thereby polymerizing the amino acids delivered by tRNAs into a polypeptide chain. The nascent polypeptides leave the ribosome through a tunnel in the LSU and interact with protein factors that function in enzymatic processing, targeting, and the membrane insertion of nascent chains at the exit of the ribosomal tunnel. In Schizosaccharomyces pombe (strain 972 / ATCC 24843) (Fission yeast), this protein is Large ribosomal subunit protein uL22A (rpl1701).